Consider the following 293-residue polypeptide: Elongation factor Ts (293 aa).

The involved in Mg(2+) ion dislocation from EF-Tu stretch occupies residues 80 to 83; sequence TDFV.

This sequence belongs to the EF-Ts family.

Its subcellular location is the cytoplasm. Associates with the EF-Tu.GDP complex and induces the exchange of GDP to GTP. It remains bound to the aminoacyl-tRNA.EF-Tu.GTP complex up to the GTP hydrolysis stage on the ribosome. The sequence is that of Elongation factor Ts from Staphylococcus aureus (strain USA300).